We begin with the raw amino-acid sequence, 79 residues long: Quinohemoprotein amine dehydrogenase subunit gamma (79 aa).

The 4-cysteinyl-glutamic acid (Cys-Glu) cross-link spans 7–16 (CTATTDPGWE). 2 consecutive cross-links (3-cysteinyl-aspartic acid (Cys-Asp)) follow at residues 27 to 33 (CQPMEAD) and 41 to 49 (CWWPAQVPD). Catalysis depends on aspartate 33, which acts as the Proton acceptor. The segment at residues 37–43 (CSDPCWW) is a cross-link (4'-cysteinyl-tryptophylquinone (Cys-Trp)). Tryptophylquinone is present on tryptophan 43.

Belongs to the quinohemoprotein amine dehydrogenase subunit gamma family. Heterotrimer of an alpha, a beta and a gamma subunit. Requires cysteine tryptophylquinone residue as cofactor. In terms of processing, the cysteine tryptophylquinone (CTQ) is generated by oxidation of the indole ring of a tryptophan residue to form tryptophylquinone, followed by covalent cross-linking with a cysteine residue.

It is found in the periplasm. It carries out the reaction an aliphatic amine + A + H2O = an aldehyde + AH2 + NH4(+). Its function is as follows. Catalyzes the oxidative deamination of a wide range of aliphatic monoamines and diamines. The physiological electron acceptor is an azurin-like blue protein. In Pseudomonas putida (strain ATCC 47054 / DSM 6125 / CFBP 8728 / NCIMB 11950 / KT2440), this protein is Quinohemoprotein amine dehydrogenase subunit gamma (qhnDH).